The primary structure comprises 156 residues: ATP synthase subunit b (156 aa).

Residues 3 to 23 (INFTLLAQALAFAGLIWIIAT) form a helical membrane-spanning segment.

This sequence belongs to the ATPase B chain family. F-type ATPases have 2 components, F(1) - the catalytic core - and F(0) - the membrane proton channel. F(1) has five subunits: alpha(3), beta(3), gamma(1), delta(1), epsilon(1). F(0) has three main subunits: a(1), b(2) and c(10-14). The alpha and beta chains form an alternating ring which encloses part of the gamma chain. F(1) is attached to F(0) by a central stalk formed by the gamma and epsilon chains, while a peripheral stalk is formed by the delta and b chains.

It localises to the cell inner membrane. Functionally, f(1)F(0) ATP synthase produces ATP from ADP in the presence of a proton or sodium gradient. F-type ATPases consist of two structural domains, F(1) containing the extramembraneous catalytic core and F(0) containing the membrane proton channel, linked together by a central stalk and a peripheral stalk. During catalysis, ATP synthesis in the catalytic domain of F(1) is coupled via a rotary mechanism of the central stalk subunits to proton translocation. Component of the F(0) channel, it forms part of the peripheral stalk, linking F(1) to F(0). This chain is ATP synthase subunit b, found in Stenotrophomonas maltophilia (strain R551-3).